The sequence spans 563 residues: (R)-mandelonitrile lyase 2 (563 aa).

The signal sequence occupies residues 1-27 (MEKSTMSAILLVLYIFVLHLQYSEVHS). FAD is bound by residues 63 to 64 (TS), 82 to 83 (ER), Val129, Thr133, and 137 to 140 (NAGV). Asn145 and Asn162 each carry an N-linked (GlcNAc...) asparagine glycan. Val244 is an FAD binding site. Cys355 serves as a coordination point for substrate. N-linked (GlcNAc...) asparagine glycosylation is found at Asn379 and Asn419. Cys426 and Cys477 are disulfide-bonded. Residue Tyr484 participates in substrate binding. FAD contacts are provided by residues 485–486 (WH) and Gly514. His486 (proton donor) is an active-site residue. His524 functions as the Proton acceptor in the catalytic mechanism. 525 to 526 (PQ) provides a ligand contact to FAD.

It belongs to the GMC oxidoreductase family. In terms of assembly, monomer. Requires FAD as cofactor. Post-translationally, glycosylated. Deglycosylation does not affect the enzymatic activity.

The enzyme catalyses (R)-mandelonitrile = benzaldehyde + hydrogen cyanide. Involved in cyanogenesis, the release of HCN from injured tissues. Catalyzes the stereospecific addition of HCN to a variety of aldehydes in vitro. Has no oxidase activity. The redox properties of the FAD cofactor appear to be unimportant for catalysis. The chain is (R)-mandelonitrile lyase 2 (MDL2) from Prunus dulcis (Almond).